The following is a 577-amino-acid chain: Arginine--tRNA ligase (577 aa).

The 'HIGH' region motif lies at 122–132; sequence PNVAKEMHVGH.

Belongs to the class-I aminoacyl-tRNA synthetase family. As to quaternary structure, monomer.

It is found in the cytoplasm. It carries out the reaction tRNA(Arg) + L-arginine + ATP = L-arginyl-tRNA(Arg) + AMP + diphosphate. The sequence is that of Arginine--tRNA ligase from Escherichia fergusonii (strain ATCC 35469 / DSM 13698 / CCUG 18766 / IAM 14443 / JCM 21226 / LMG 7866 / NBRC 102419 / NCTC 12128 / CDC 0568-73).